We begin with the raw amino-acid sequence, 374 residues long: Protein-glutamate methylesterase/protein-glutamine glutaminase (374 aa).

A Response regulatory domain is found at 4–121 (KVLVVDDSGF…SRNPDKVKQM (118 aa)). Aspartate 55 is subject to 4-aspartylphosphate. Residues 144-186 (PVAAPVPASSPAPASSFASPAPARPAATARAAAPAASHSPAPK) are disordered. Positions 154–183 (PAPASSFASPAPARPAATARAAAPAASHSP) are enriched in low complexity. One can recognise a CheB-type methylesterase domain in the interval 183–374 (PAPKRKPYKL…IGKHLVEACV (192 aa)). Catalysis depends on residues serine 198, histidine 225, and aspartate 318.

This sequence belongs to the CheB family. In terms of processing, phosphorylated by CheA. Phosphorylation of the N-terminal regulatory domain activates the methylesterase activity.

Its subcellular location is the cytoplasm. It catalyses the reaction [protein]-L-glutamate 5-O-methyl ester + H2O = L-glutamyl-[protein] + methanol + H(+). It carries out the reaction L-glutaminyl-[protein] + H2O = L-glutamyl-[protein] + NH4(+). Functionally, involved in chemotaxis. Part of a chemotaxis signal transduction system that modulates chemotaxis in response to various stimuli. Catalyzes the demethylation of specific methylglutamate residues introduced into the chemoreceptors (methyl-accepting chemotaxis proteins or MCP) by CheR. Also mediates the irreversible deamidation of specific glutamine residues to glutamic acid. This is Protein-glutamate methylesterase/protein-glutamine glutaminase from Pseudomonas putida (Arthrobacter siderocapsulatus).